The following is a 370-amino-acid chain: Putative 8-amino-7-oxononanoate synthase (370 aa).

Residue arginine 20 participates in substrate binding. Residue 95 to 96 (GY) coordinates pyridoxal 5'-phosphate. A substrate-binding site is contributed by histidine 120. Residues serine 167, 192-195 (DDAH), and 223-226 (TLSK) each bind pyridoxal 5'-phosphate. Residue lysine 226 is modified to N6-(pyridoxal phosphate)lysine. Threonine 337 contacts substrate.

Belongs to the class-II pyridoxal-phosphate-dependent aminotransferase family. BioF subfamily. In terms of assembly, homodimer. The cofactor is pyridoxal 5'-phosphate.

The enzyme catalyses 6-carboxyhexanoyl-[ACP] + L-alanine + H(+) = (8S)-8-amino-7-oxononanoate + holo-[ACP] + CO2. Its pathway is cofactor biosynthesis; biotin biosynthesis. Functionally, catalyzes the decarboxylative condensation of pimeloyl-[acyl-carrier protein] and L-alanine to produce 8-amino-7-oxononanoate (AON), [acyl-carrier protein], and carbon dioxide. The sequence is that of Putative 8-amino-7-oxononanoate synthase (bioF) from Methanococcus vannielii (strain ATCC 35089 / DSM 1224 / JCM 13029 / OCM 148 / SB).